Reading from the N-terminus, the 444-residue chain is Methylenetetrahydrofolate--tRNA-(uracil-5-)-methyltransferase TrmFO (444 aa).

Residue Gly10 to Gly15 participates in FAD binding.

Belongs to the MnmG family. TrmFO subfamily. Requires FAD as cofactor.

The protein localises to the cytoplasm. It carries out the reaction uridine(54) in tRNA + (6R)-5,10-methylene-5,6,7,8-tetrahydrofolate + NADH + H(+) = 5-methyluridine(54) in tRNA + (6S)-5,6,7,8-tetrahydrofolate + NAD(+). The catalysed reaction is uridine(54) in tRNA + (6R)-5,10-methylene-5,6,7,8-tetrahydrofolate + NADPH + H(+) = 5-methyluridine(54) in tRNA + (6S)-5,6,7,8-tetrahydrofolate + NADP(+). In terms of biological role, catalyzes the folate-dependent formation of 5-methyl-uridine at position 54 (M-5-U54) in all tRNAs. The chain is Methylenetetrahydrofolate--tRNA-(uracil-5-)-methyltransferase TrmFO from Streptococcus uberis (strain ATCC BAA-854 / 0140J).